The chain runs to 353 residues: MFKRFIFITLSLLVFACFKSNKKSIKSDKVVVGVLAHGSFYDKGYNQSVHDGVVKLRDNFGIKLITKSLRPYPIEGKRLLTVDEAMTEDAYEVQKNPLNLFWLIGYRFSDLSVKLSYERPDIYYGIIDAFDYGDIQVPKNSLAIKFRNEEAAFLAGYIAAKMSRKEKIGFLTGPMSEHLKDFKFGFKAGIFYANPKLRLVSKKAPSLFDKEKGKAMALFMYKEDKVGVIFPIAGITGLGVYDAAKELGPKYYVIGLNQDQSYIAPQNVITSIIKDIGKVIYSISSEYINNRVFKGGIIIDRGLKEGVIEIVKDPDVLNNRLVDEVIDLENKIISGEIIVPDSEYAFDLFKSKL.

A signal peptide spans 1–16 (MFKRFIFITLSLLVFA). A lipid anchor (N-palmitoyl cysteine) is attached at Cys-17. Cys-17 carries S-diacylglycerol cysteine lipidation.

It belongs to the BMP lipoprotein family. In terms of assembly, monomer.

It localises to the cell inner membrane. In terms of biological role, may be part of an ABC-type nucleoside uptake system involved in the purine salvage pathway. In Borreliella burgdorferi (strain N40) (Borrelia burgdorferi), this protein is Basic membrane protein C (bmpC).